The following is a 418-amino-acid chain: Serine hydroxymethyltransferase (418 aa).

(6S)-5,6,7,8-tetrahydrofolate-binding positions include Leu121 and Gly125–Leu127. Lys230 carries the post-translational modification N6-(pyridoxal phosphate)lysine. Ser355–Phe357 lines the (6S)-5,6,7,8-tetrahydrofolate pocket.

This sequence belongs to the SHMT family. Homodimer. It depends on pyridoxal 5'-phosphate as a cofactor.

The protein localises to the cytoplasm. The catalysed reaction is (6R)-5,10-methylene-5,6,7,8-tetrahydrofolate + glycine + H2O = (6S)-5,6,7,8-tetrahydrofolate + L-serine. It participates in one-carbon metabolism; tetrahydrofolate interconversion. The protein operates within amino-acid biosynthesis; glycine biosynthesis; glycine from L-serine: step 1/1. In terms of biological role, catalyzes the reversible interconversion of serine and glycine with tetrahydrofolate (THF) serving as the one-carbon carrier. This reaction serves as the major source of one-carbon groups required for the biosynthesis of purines, thymidylate, methionine, and other important biomolecules. Also exhibits THF-independent aldolase activity toward beta-hydroxyamino acids, producing glycine and aldehydes, via a retro-aldol mechanism. The protein is Serine hydroxymethyltransferase of Streptococcus pneumoniae (strain P1031).